The sequence spans 122 residues: Small ribosomal subunit protein uS13 (122 aa).

Residues 95 to 122 (GLPVRGQRTHTNARTRKGPAKSIAGKKK) are disordered.

This sequence belongs to the universal ribosomal protein uS13 family. In terms of assembly, part of the 30S ribosomal subunit. Forms a loose heterodimer with protein S19. Forms two bridges to the 50S subunit in the 70S ribosome.

In terms of biological role, located at the top of the head of the 30S subunit, it contacts several helices of the 16S rRNA. In the 70S ribosome it contacts the 23S rRNA (bridge B1a) and protein L5 of the 50S subunit (bridge B1b), connecting the 2 subunits; these bridges are implicated in subunit movement. Contacts the tRNAs in the A and P-sites. The sequence is that of Small ribosomal subunit protein uS13 from Nitrobacter hamburgensis (strain DSM 10229 / NCIMB 13809 / X14).